The chain runs to 436 residues: UPF0597 protein YhaM (436 aa).

This sequence belongs to the UPF0597 family.

This Salmonella paratyphi C (strain RKS4594) protein is UPF0597 protein YhaM.